The chain runs to 417 residues: Serine hydroxymethyltransferase (417 aa).

(6S)-5,6,7,8-tetrahydrofolate-binding positions include Leu-122 and 126–128; that span reads GHL. Position 231 is an N6-(pyridoxal phosphate)lysine (Lys-231).

It belongs to the SHMT family. As to quaternary structure, homodimer. Requires pyridoxal 5'-phosphate as cofactor.

The protein localises to the cytoplasm. It carries out the reaction (6R)-5,10-methylene-5,6,7,8-tetrahydrofolate + glycine + H2O = (6S)-5,6,7,8-tetrahydrofolate + L-serine. It functions in the pathway one-carbon metabolism; tetrahydrofolate interconversion. Its pathway is amino-acid biosynthesis; glycine biosynthesis; glycine from L-serine: step 1/1. Functionally, catalyzes the reversible interconversion of serine and glycine with tetrahydrofolate (THF) serving as the one-carbon carrier. This reaction serves as the major source of one-carbon groups required for the biosynthesis of purines, thymidylate, methionine, and other important biomolecules. Also exhibits THF-independent aldolase activity toward beta-hydroxyamino acids, producing glycine and aldehydes, via a retro-aldol mechanism. This chain is Serine hydroxymethyltransferase, found in Caldicellulosiruptor saccharolyticus (strain ATCC 43494 / DSM 8903 / Tp8T 6331).